The primary structure comprises 568 residues: Delta 8-(E)-sphingolipid desaturase (568 aa).

Residues 2–77 form the Cytochrome b5 heme-binding domain; sequence DNIISRGEIE…FRKWRIGRID (76 aa). Heme is bound by residues H37 and H60. The next 2 membrane-spanning stretches (helical) occupy residues 241 to 261 and 272 to 292; these read FWSA…AHDA and LDNI…LGWW. The Histidine box-1 motif lies at 259 to 263; that stretch reads HDAGH. Positions 296-300 match the Histidine box-2 motif; it reads HNVHH. Transmembrane regions (helical) follow at residues 352–377, 389–409, and 421–441; these read YLYY…LLGL, YFEL…LVGC, and IMVS…SHFA. The Histidine box-3 signature appears at 480–484; the sequence is QVVHH. Over residues 549-560 the composition is skewed to basic and acidic residues; the sequence is ATGEREADEKTY. The tract at residues 549–568 is disordered; the sequence is ATGEREADEKTYRTKSIKNA.

It belongs to the fatty acid desaturase type 1 family.

Its subcellular location is the membrane. It carries out the reaction an N-acylsphing-4-enine + 2 Fe(II)-[cytochrome b5] + O2 + 2 H(+) = a (4E,8E)-4-sphinga-4,8-dienine ceramide + 2 Fe(III)-[cytochrome b5] + 2 H2O. Its pathway is lipid metabolism; sphingolipid metabolism. In terms of biological role, delta(8)-fatty-acid desaturase which introduces a double bond at the 8-position in the long-chain base (LCB) of ceramides. Required for the formation of the di-unsaturated sphingoid base (E,E)-sphinga-4,8-dienine during glucosylceramide (GluCer) biosynthesis. The polypeptide is Delta 8-(E)-sphingolipid desaturase (Lachancea kluyveri (strain ATCC 58438 / CBS 3082 / BCRC 21498 / NBRC 1685 / JCM 7257 / NCYC 543 / NRRL Y-12651) (Yeast)).